We begin with the raw amino-acid sequence, 1383 residues long: Negative regulator of sporulation MDS3 (1383 aa).

3 Kelch repeats span residues cysteine 124–phenylalanine 179, glycine 199–glutamate 246, and glutamine 356–phenylalanine 402. Polar residues predominate over residues glycine 450–valine 460. 7 disordered regions span residues glycine 450–alanine 506, asparagine 625–lysine 644, leucine 653–serine 825, leucine 858–serine 884, asparagine 1063–glutamate 1114, glutamine 1251–glutamine 1289, and serine 1321–serine 1369. Residues lysine 631–lysine 644 show a composition bias toward low complexity. Residues valine 693 to threonine 707 are compositionally biased toward basic and acidic residues. 3 stretches are compositionally biased toward low complexity: residues asparagine 726–proline 758, glutamate 803–glycine 815, and leucine 858–valine 874. The segment covering glutamate 1084 to lysine 1094 has biased composition (basic and acidic residues). Low complexity predominate over residues glutamine 1251–serine 1280. The span at leucine 1341–asparagine 1352 shows a compositional bias: polar residues.

Interacts with SIT4.

The protein localises to the cytoplasm. Its function is as follows. Negatively regulates early sporulation-specific genes. TOR signaling pathway component that contributes to morphogenesis as a regulator of this key morphogenetic pathway. Required for growth and hyphal formation at pH 9, for full virulence in a mouse model of systemic infection and for biofilm formation. Involved in chlamydospore formation, distinctive morphological feature of the fungal pathogen C.albicans that can be induced to form in oxygen-limited environments and has been reported in clinical specimens. The polypeptide is Negative regulator of sporulation MDS3 (MDS3) (Candida albicans (strain SC5314 / ATCC MYA-2876) (Yeast)).